A 210-amino-acid polypeptide reads, in one-letter code: uncharacterized protein (210 aa).

This is an uncharacterized protein from Sulfolobus islandicus filamentous virus (isolate Iceland/Hveragerdi) (SIFV).